We begin with the raw amino-acid sequence, 69 residues long: uncharacterized protein (69 aa).

4Fe-4S ferredoxin-type domains follow at residues 2–30 (KIEINENFCKGCDICIVVCPRGVFEKSKK) and 38–67 (PPIPVNPEKCTKCNLCILQCPDQAISIELS). Residues Cys10, Cys13, Cys16, Cys20, Cys47, Cys50, Cys53, and Cys57 each contribute to the [4Fe-4S] cluster site.

[4Fe-4S] cluster serves as cofactor.

This is an uncharacterized protein from Methanocaldococcus jannaschii (strain ATCC 43067 / DSM 2661 / JAL-1 / JCM 10045 / NBRC 100440) (Methanococcus jannaschii).